Consider the following 372-residue polypeptide: GPN-loop GTPase 1 (372 aa).

An N-acetylalanine modification is found at A2. 29–34 serves as a coordination point for GTP; the sequence is GSGKTT. Residues 86-88 carry the Gly-Pro-Asn (GPN)-loop; involved in dimer interface motif; sequence GPN. Residue 189-192 coordinates GTP; sequence NKTD. Phosphoserine occurs at positions 301 and 314. The tract at residues 303 to 372 is disordered; sequence ALDPEAGKGN…ESMAHWKRNK (70 aa). A Phosphothreonine modification is found at T328. The span at 330–342 shows a compositional bias: acidic residues; sequence DEEDEEADSDTDD. S338 is subject to Phosphoserine. T340 is subject to Phosphothreonine. Basic and acidic residues predominate over residues 343–355; it reads IDHRVTEESREEP.

The protein belongs to the GPN-loop GTPase family. As to quaternary structure, heterodimer with GPN3. Binds to RNA polymerase II (RNAPII). Interacts directly with RNAPII subunits RPB4 and RPB7 and the CTD of RPB1. Interacts with XPA.

Its subcellular location is the cytoplasm. The protein localises to the nucleus. Small GTPase required for proper nuclear import of RNA polymerase II (RNAPII). May act at an RNAP assembly step prior to nuclear import. Forms an interface between the RNA polymerase II enzyme and chaperone/scaffolding proteins, suggesting that it is required to connect RNA polymerase II to regulators of protein complex formation. May be involved in nuclear localization of XPA. This Mus musculus (Mouse) protein is GPN-loop GTPase 1.